The primary structure comprises 119 residues: QGPFGPGCEEAGCPEGSACNIITDRCTCPEVRCRVYCSHGFQRSRYGCEVCRCRTEPMKATCDISECPEGMMCSRLTNKCDCKIDINCRKTCPNGLKRDKLGCEYCECKPKRKLVPRLS.

At Gln1 the chain carries Pyrrolidone carboxylic acid. 10 disulfides stabilise this stretch: Cys8–Cys19, Cys13–Cys26, Cys28–Cys48, Cys33–Cys51, Cys37–Cys53, Cys62–Cys73, Cys67–Cys80, Cys82–Cys103, Cys88–Cys106, and Cys92–Cys108. The Antistasin-like 1 domain maps to 28–53; the sequence is CPEVRCRVYCSHGFQRSRYGCEVCRC. In terms of domain architecture, Antistasin-like 2 spans 83–108; that stretch reads KIDINCRKTCPNGLKRDKLGCEYCEC. Heparin-binding positions include 97–100 and 111–118; these read KRDK and KRKLVPRL.

It belongs to the protease inhibitor I15 (antistasin) family.

The protein resides in the secreted. Functionally, this highly disulfide-bonded protein is a potent inhibitor of factor Xa. May have therapeutic utility as an anticoagulant. Also exhibits a strong metastatic activity. The protein is Ghilanten of Haementeria ghilianii (Amazon leech).